The chain runs to 332 residues: Putative D-threonate 4-phosphate dehydrogenase (332 aa).

Residues His-138 and Thr-139 each coordinate substrate. The a divalent metal cation site is built by His-168, His-211, and His-266. 2 residues coordinate substrate: Lys-274 and Arg-292.

Belongs to the PdxA family. PdxA2 subfamily. In terms of assembly, homodimer. Requires a divalent metal cation as cofactor.

It catalyses the reaction 4-O-phospho-D-threonate + NAD(+) = dihydroxyacetone phosphate + CO2 + NADH. Catalyzes the NAD-dependent oxidation and subsequent decarboxylation of D-threonate 4-phosphate to produce dihydroxyacetone phosphate (DHAP). This is Putative D-threonate 4-phosphate dehydrogenase from Fusobacterium nucleatum subsp. nucleatum (strain ATCC 25586 / DSM 15643 / BCRC 10681 / CIP 101130 / JCM 8532 / KCTC 2640 / LMG 13131 / VPI 4355).